We begin with the raw amino-acid sequence, 363 residues long: Protein RecA (363 aa).

Residue 79–86 coordinates ATP; that stretch reads GPESSGKT.

It belongs to the RecA family.

It is found in the cytoplasm. Its function is as follows. Can catalyze the hydrolysis of ATP in the presence of single-stranded DNA, the ATP-dependent uptake of single-stranded DNA by duplex DNA, and the ATP-dependent hybridization of homologous single-stranded DNAs. It interacts with LexA causing its activation and leading to its autocatalytic cleavage. The sequence is that of Protein RecA from Borrelia turicatae (strain 91E135).